A 384-amino-acid polypeptide reads, in one-letter code: MGAHASVTDTNILSGLESNATGVTAFSMPGWQLALWATAYLALVLVAVTGNATVIWIILAHERMRTVTNYFIINLALADLCMAAFNATFNFIYASHNIWYFGSTFCYFQNLFPVTAMFVSIYSMTAIAADRYMAIVHPFQPRLSAPSTKAVIAVIWLVALALASPQCFYSTITVDQGATKCVVAWPNDNGGKMLLLYHLVVFVLIYFLPLVVMFAAYSVIGLTLWKRAVPRHQAHGANLRHLQAKKKFVKAMVLVVVTFAICWLPYHLYFILGTFQEDIYYRKFIQQVYLALFWLAMSSTMYNPIIYCCLNHRFRSGFRLAFRCCPWGTPTEEDRLELTHTPSISRRVNRCHTKETLFMTGDMTHSEATNGQVGGPQDGEPAGP.

Topologically, residues 1–32 (MGAHASVTDTNILSGLESNATGVTAFSMPGWQ) are extracellular. N-linked (GlcNAc...) asparagine glycosylation occurs at Asn-19. The chain crosses the membrane as a helical span at residues 33-56 (LALWATAYLALVLVAVTGNATVIW). Topologically, residues 57–69 (IILAHERMRTVTN) are cytoplasmic. A helical membrane pass occupies residues 70-90 (YFIINLALADLCMAAFNATFN). At 91-107 (FIYASHNIWYFGSTFCY) the chain is on the extracellular side. An intrachain disulfide couples Cys-106 to Cys-181. Residues 108 to 129 (FQNLFPVTAMFVSIYSMTAIAA) traverse the membrane as a helical segment. Over 130–149 (DRYMAIVHPFQPRLSAPSTK) the chain is Cytoplasmic. The helical transmembrane segment at 150 to 170 (AVIAVIWLVALALASPQCFYS) threads the bilayer. Residues 171–196 (TITVDQGATKCVVAWPNDNGGKMLLL) are Extracellular-facing. Residues 197 to 218 (YHLVVFVLIYFLPLVVMFAAYS) traverse the membrane as a helical segment. Topologically, residues 219–251 (VIGLTLWKRAVPRHQAHGANLRHLQAKKKFVKA) are cytoplasmic. Residues 252–272 (MVLVVVTFAICWLPYHLYFIL) traverse the membrane as a helical segment. Residues 273–290 (GTFQEDIYYRKFIQQVYL) lie on the Extracellular side of the membrane. The chain crosses the membrane as a helical span at residues 291-310 (ALFWLAMSSTMYNPIIYCCL). At 311-384 (NHRFRSGFRL…GPQDGEPAGP (74 aa)) the chain is on the cytoplasmic side. A lipid anchor (S-palmitoyl cysteine) is attached at Cys-324. The tract at residues 365–384 (HSEATNGQVGGPQDGEPAGP) is disordered.

This sequence belongs to the G-protein coupled receptor 1 family.

The protein resides in the cell membrane. This is a receptor for the tachykinin neuropeptide substance K (neurokinin A). It is associated with G proteins that activate a phosphatidylinositol-calcium second messenger system. The rank order of affinity of this receptor to tachykinins is: substance K &gt; neuromedin-K &gt; substance P. This Mus musculus (Mouse) protein is Substance-K receptor (Tacr2).